The sequence spans 420 residues: Gamma-glutamyl phosphate reductase 2 (420 aa).

The protein belongs to the gamma-glutamyl phosphate reductase family.

It localises to the cytoplasm. It catalyses the reaction L-glutamate 5-semialdehyde + phosphate + NADP(+) = L-glutamyl 5-phosphate + NADPH + H(+). The protein operates within amino-acid biosynthesis; L-proline biosynthesis; L-glutamate 5-semialdehyde from L-glutamate: step 2/2. In terms of biological role, catalyzes the NADPH-dependent reduction of L-glutamate 5-phosphate into L-glutamate 5-semialdehyde and phosphate. The product spontaneously undergoes cyclization to form 1-pyrroline-5-carboxylate. In Synechocystis sp. (strain ATCC 27184 / PCC 6803 / Kazusa), this protein is Gamma-glutamyl phosphate reductase 2.